A 712-amino-acid chain; its full sequence is Ribosome-releasing factor 2, mitochondrial (712 aa).

A mitochondrion-targeting transit peptide spans 1–28; that stretch reads MQYSLLSAQLRCSRFLLRQQAPFINRCY. Residues 30 to 309 form the tr-type G domain; the sequence is DDIRNIGILA…AVNAYLPTPN (280 aa). GTP-binding positions include 39-46, 103-107, and 157-160; these read AHIDAGKT, DTPGH, and NKMD.

This sequence belongs to the TRAFAC class translation factor GTPase superfamily. Classic translation factor GTPase family. EF-G/EF-2 subfamily.

The protein localises to the mitochondrion. Its function is as follows. Mitochondrial GTPase that mediates the disassembly of ribosomes from messenger RNA at the termination of mitochondrial protein biosynthesis. Not involved in the GTP-dependent ribosomal translocation step during translation elongation. The polypeptide is Ribosome-releasing factor 2, mitochondrial (Drosophila virilis (Fruit fly)).